Here is a 559-residue protein sequence, read N- to C-terminus: TBC1 domain family member 24 (559 aa).

A 1,2-diacyl-sn-glycero-3-phospho-(1D-myo-inositol) is bound by residues K36, R40, K238, R242, and 293–297 (RLFSR). Positions 47–262 (SHALRGKVYQ…KVRAGQPLES (216 aa)) constitute a Rab-GAP TBC domain. The region spanning 343–554 (EIVSVREMRD…IAAVEAWGFQ (212 aa)) is the TLDc domain. Phosphoserine is present on residues S473 and S480.

In terms of assembly, interacts with ARF6. Highest expression in brain.

It localises to the cell membrane. The protein resides in the cytoplasm. The protein localises to the cytoplasmic vesicle membrane. It is found in the presynapse. Functionally, may act as a GTPase-activating protein for Rab family protein(s). Involved in neuronal projections development, probably through a negative modulation of ARF6 function. Involved in the regulation of synaptic vesicle trafficking. The chain is TBC1 domain family member 24 (TBC1D24) from Homo sapiens (Human).